We begin with the raw amino-acid sequence, 122 residues long: Holo-[acyl-carrier-protein] synthase (122 aa).

The Mg(2+) site is built by D8 and E52.

It belongs to the P-Pant transferase superfamily. AcpS family. It depends on Mg(2+) as a cofactor.

The protein resides in the cytoplasm. It catalyses the reaction apo-[ACP] + CoA = holo-[ACP] + adenosine 3',5'-bisphosphate + H(+). Its function is as follows. Transfers the 4'-phosphopantetheine moiety from coenzyme A to a Ser of acyl-carrier-protein. The chain is Holo-[acyl-carrier-protein] synthase from Lachnoclostridium phytofermentans (strain ATCC 700394 / DSM 18823 / ISDg) (Clostridium phytofermentans).